A 58-amino-acid chain; its full sequence is Small ribosomal subunit protein bS21 (58 aa).

The protein belongs to the bacterial ribosomal protein bS21 family.

The polypeptide is Small ribosomal subunit protein bS21 (Staphylococcus saprophyticus subsp. saprophyticus (strain ATCC 15305 / DSM 20229 / NCIMB 8711 / NCTC 7292 / S-41)).